The primary structure comprises 525 residues: GMP synthase [glutamine-hydrolyzing] (525 aa).

Residues 9 to 207 enclose the Glutamine amidotransferase type-1 domain; it reads RILILDFGSQ…VLDICGCEAL (199 aa). The Nucleophile role is filled by cysteine 86. Catalysis depends on residues histidine 181 and glutamate 183. The region spanning 208–400 is the GMPS ATP-PPase domain; that stretch reads WTPSKIAEDA…LGLPYDMVYR (193 aa). 235-241 serves as a coordination point for ATP; that stretch reads SGGVDSS.

As to quaternary structure, homodimer.

It catalyses the reaction XMP + L-glutamine + ATP + H2O = GMP + L-glutamate + AMP + diphosphate + 2 H(+). It participates in purine metabolism; GMP biosynthesis; GMP from XMP (L-Gln route): step 1/1. Its function is as follows. Catalyzes the synthesis of GMP from XMP. The chain is GMP synthase [glutamine-hydrolyzing] from Pseudomonas fluorescens (strain Pf0-1).